The sequence spans 652 residues: tRNA 5-methylaminomethyl-2-thiouridine biosynthesis bifunctional protein MnmC (652 aa).

Positions 1–235 are tRNA (mnm(5)s(2)U34)-methyltransferase; it reads MPDRLVPATL…EPALRVGEYA (235 aa). The tract at residues 259 to 652 is FAD-dependent cmnm(5)s(2)U34 oxidoreductase; sequence IGAGLAGCAV…IRALRGRQIG (394 aa).

It in the N-terminal section; belongs to the methyltransferase superfamily. tRNA (mnm(5)s(2)U34)-methyltransferase family. The protein in the C-terminal section; belongs to the DAO family. Requires FAD as cofactor.

Its subcellular location is the cytoplasm. It carries out the reaction 5-aminomethyl-2-thiouridine(34) in tRNA + S-adenosyl-L-methionine = 5-methylaminomethyl-2-thiouridine(34) in tRNA + S-adenosyl-L-homocysteine + H(+). Its function is as follows. Catalyzes the last two steps in the biosynthesis of 5-methylaminomethyl-2-thiouridine (mnm(5)s(2)U) at the wobble position (U34) in tRNA. Catalyzes the FAD-dependent demodification of cmnm(5)s(2)U34 to nm(5)s(2)U34, followed by the transfer of a methyl group from S-adenosyl-L-methionine to nm(5)s(2)U34, to form mnm(5)s(2)U34. The protein is tRNA 5-methylaminomethyl-2-thiouridine biosynthesis bifunctional protein MnmC of Burkholderia ambifaria (strain ATCC BAA-244 / DSM 16087 / CCUG 44356 / LMG 19182 / AMMD) (Burkholderia cepacia (strain AMMD)).